The following is a 398-amino-acid chain: MASINEFIQKYQAIQKDFEEIIENPDWRAECRKKKINVVSKGKKVNFKYDNRCKLKTAWTRSCRGVCVEFDTETGKPIRKPIYSFNKFDNRHNEPDFYNNLLECEAVVLANKFDGSFVRIWYDGVEEKFVTATLGTLSADDKFLVAETMMDQRIARHLKGNPYDCLLAELITPKNIIVTDYNGKSFLTPLSIVSHVDGLPRWSTLRKVVPDMFMENGLPYYCRFTTIETLENDLKEFEQMTIDNPDVYGRIPEGVCVYQCSLKDGLVDVATPMSKIKRDEYVSVHGKPSGKKEEKSKPPAILGRAVTDPKFLQQHAILKFIYDDIEEKTEDEFFMVLENWYENYKTIDRDTNVKKELFGKKDHDKYGRTFRDLLLEIDNKGRTKLEQFFCRYGPQWYQ.

This is an uncharacterized protein from Ostreid herpesvirus 1 (isolate France) (OsHV-1).